The primary structure comprises 84 residues: RNA-binding protein Hfq (84 aa).

A Sm domain is found at 11–71; it reads DTFLNHVRKN…ISTIMPGHPV (61 aa).

Belongs to the Hfq family. As to quaternary structure, homohexamer.

Its function is as follows. RNA chaperone that binds small regulatory RNA (sRNAs) and mRNAs to facilitate mRNA translational regulation in response to envelope stress, environmental stress and changes in metabolite concentrations. Also binds with high specificity to tRNAs. In Methylobacterium nodulans (strain LMG 21967 / CNCM I-2342 / ORS 2060), this protein is RNA-binding protein Hfq.